The chain runs to 253 residues: UPF0758 protein Bxeno_A3578 (253 aa).

The MPN domain maps to 131 to 253; sequence LINSPEAVEN…VYSFARAGWP (123 aa). Zn(2+)-binding residues include His-202, His-204, and Asp-215. The short motif at 202-215 is the JAMM motif element; that stretch reads HNHPSGAVQPSASD.

Belongs to the UPF0758 family.

In Paraburkholderia xenovorans (strain LB400), this protein is UPF0758 protein Bxeno_A3578.